A 154-amino-acid chain; its full sequence is MAYAVVRVRGSVGVRGDIADTMKMLRLHRVNHCVVIPENDHYTGMIKKVKDYVTYGEIDKETLVSLILKRGRLAGNKRLSEELLKELVELPVDALAEKVLAGEIKLKDTPIKPVFRLHPPRRGYDRGGIKKGFSIGGALGYRAGKINDLLNKMM.

This sequence belongs to the universal ribosomal protein uL30 family. In terms of assembly, part of the 50S ribosomal subunit.

The sequence is that of Large ribosomal subunit protein uL30 from Methanococcus vannielii.